The chain runs to 118 residues: Large ribosomal subunit protein bL20 (118 aa).

It belongs to the bacterial ribosomal protein bL20 family.

In terms of biological role, binds directly to 23S ribosomal RNA and is necessary for the in vitro assembly process of the 50S ribosomal subunit. It is not involved in the protein synthesizing functions of that subunit. The chain is Large ribosomal subunit protein bL20 from Psychrobacter arcticus (strain DSM 17307 / VKM B-2377 / 273-4).